The following is a 147-amino-acid chain: Large ribosomal subunit protein uL15 (147 aa).

Residues 1–20 (MTMHLNDLKPADGARTERTR) are compositionally biased toward basic and acidic residues. Positions 1–64 (MTMHLNDLKP…GGQTPMQRRL (64 aa)) are disordered. The segment covering 23–33 (RGIGSGLGKTC) has biased composition (gly residues). Over residues 34-47 (GRGHKGSFARKGGG) the composition is skewed to basic residues.

It belongs to the universal ribosomal protein uL15 family. As to quaternary structure, part of the 50S ribosomal subunit.

Binds to the 23S rRNA. This Xanthomonas campestris pv. campestris (strain 8004) protein is Large ribosomal subunit protein uL15.